An 89-amino-acid chain; its full sequence is UPF0237 protein Cgl1544/cg1742 (89 aa).

The region spanning 4 to 82 (IMTVTGQDHT…LVIRIQSEAL (79 aa)) is the ACT domain.

The protein belongs to the UPF0237 family.

In Corynebacterium glutamicum (strain ATCC 13032 / DSM 20300 / JCM 1318 / BCRC 11384 / CCUG 27702 / LMG 3730 / NBRC 12168 / NCIMB 10025 / NRRL B-2784 / 534), this protein is UPF0237 protein Cgl1544/cg1742.